A 259-amino-acid polypeptide reads, in one-letter code: Hydroxyethylthiazole kinase (259 aa).

Substrate is bound at residue methionine 38. Residues arginine 113 and serine 158 each coordinate ATP. Glycine 185 is a binding site for substrate.

This sequence belongs to the Thz kinase family. The cofactor is Mg(2+).

The catalysed reaction is 5-(2-hydroxyethyl)-4-methylthiazole + ATP = 4-methyl-5-(2-phosphooxyethyl)-thiazole + ADP + H(+). It functions in the pathway cofactor biosynthesis; thiamine diphosphate biosynthesis; 4-methyl-5-(2-phosphoethyl)-thiazole from 5-(2-hydroxyethyl)-4-methylthiazole: step 1/1. Its function is as follows. Catalyzes the phosphorylation of the hydroxyl group of 4-methyl-5-beta-hydroxyethylthiazole (THZ). This Leuconostoc citreum (strain KM20) protein is Hydroxyethylthiazole kinase.